We begin with the raw amino-acid sequence, 142 residues long: uncharacterized protein (142 aa).

The helical transmembrane segment at 75–91 (YAAILAQVSFAFLCTGF) threads the bilayer.

The protein localises to the membrane. This is an uncharacterized protein from Haemophilus influenzae (strain ATCC 51907 / DSM 11121 / KW20 / Rd).